The chain runs to 584 residues: Protein spire homolog 1 (584 aa).

The disordered stretch occupies residues 1-30 (MANTVEADGSNDEGYEAAEEGPEDEEDEKR). Residues 1-73 (MANTVEADGS…RALFAETMEL (73 aa)) enclose the KIND domain. Residues 9-28 (GSNDEGYEAAEEGPEDEEDE) show a composition bias toward acidic residues. Residues 71 to 99 (MELHTFLAKVKSAKENLKKIQEMEKSDES) adopt a coiled-coil conformation. WH2 domains lie at 147-165 (PYEM…LRKV) and 211-228 (LHER…LRPV). Residues 224-238 (KLRPVSPEEIRRSRL) show a composition bias toward basic and acidic residues. A disordered region spans residues 224–366 (KLRPVSPEEI…PTNVRQFLPP (143 aa)). A Phosphoserine modification is found at S229. The span at 242–272 (TPESTKNLMESSMVNGGLTSQTKENGLSSAE) shows a compositional bias: polar residues. Residues S292, S293, and S295 each carry the phosphoserine modification. Low complexity predominate over residues 302–320 (KSTSSSSVSPSFPEEPVLE). A Phosphothreonine modification is found at T337. Positions 340-356 (PERRQPPQRRHSIEKET) are enriched in basic and acidic residues. Polar residues predominate over residues 357–366 (PTNVRQFLPP). The spir-box stretch occupies residues 384-404 (LALTVEEVMHIRQVLVKAELE). S506, S510, and S563 each carry phosphoserine.

The protein belongs to the spire family. As to quaternary structure, interacts with FMN2.

The protein resides in the cytoplasm. The protein localises to the cytoskeleton. It localises to the cytosol. Its subcellular location is the cleavage furrow. It is found in the perinuclear region. The protein resides in the cell membrane. The protein localises to the cytoplasmic vesicle membrane. Acts as an actin nucleation factor, remains associated with the slow-growing pointed end of the new filament. Involved in intracellular vesicle transport along actin fibers, providing a novel link between actin cytoskeleton dynamics and intracellular transport. Required for asymmetric spindle positioning and asymmetric cell division during meiosis. Required for normal formation of the cleavage furrow and for polar body extrusion during female germ cell meiosis. Also acts in the nucleus: together with FMN2, promotes assembly of nuclear actin filaments in response to DNA damage in order to facilitate movement of chromatin and repair factors after DNA damage. In addition, promotes innate immune signaling downstream of dsRNA sensing. Mechanistically, contributes to IRF3 phosphorylation and activation downstream of MAVS and upstream of TBK1. The chain is Protein spire homolog 1 (SPIRE1) from Macaca fascicularis (Crab-eating macaque).